The primary structure comprises 581 residues: Lipoprotein LpqB (581 aa).

An N-terminal signal peptide occupies residues 1-23 (MRNHVSRYLTALIAVGCAATTAA). C24 carries the N-palmitoyl cysteine lipid modification. The S-diacylglycerol cysteine moiety is linked to residue C24.

It belongs to the LpqB lipoprotein family.

It localises to the cell membrane. The sequence is that of Lipoprotein LpqB from Corynebacterium diphtheriae (strain ATCC 700971 / NCTC 13129 / Biotype gravis).